The chain runs to 106 residues: Large ribosomal subunit protein eL34 (106 aa).

The protein belongs to the eukaryotic ribosomal protein eL34 family.

The chain is Large ribosomal subunit protein eL34 from Hyperthermus butylicus (strain DSM 5456 / JCM 9403 / PLM1-5).